We begin with the raw amino-acid sequence, 368 residues long: Putative flavoprotein monooxygenase (368 aa).

FAD-binding positions include Ala-14, Glu-34, Ser-41, 52–53 (IT), Val-110, Ala-307, and Ile-319.

Requires FAD as cofactor.

Its function is as follows. FAD-binding protein that may have monooxygenase activity using NADPH and/or NADH as an electron donor. This Staphylococcus aureus (strain Mu50 / ATCC 700699) protein is Putative flavoprotein monooxygenase.